The primary structure comprises 256 residues: Small ribosomal subunit protein eS1 (256 aa).

Ala-2 carries the N-acetylalanine; partial modification.

The protein belongs to the eukaryotic ribosomal protein eS1 family. Component of the small ribosomal subunit. Mature ribosomes consist of a small (40S) and a large (60S) subunit. The 40S subunit contains about 33 different proteins and 1 molecule of RNA (18S). The 60S subunit contains about 49 different proteins and 3 molecules of RNA (25S, 5.8S and 5S).

The protein resides in the cytoplasm. The chain is Small ribosomal subunit protein eS1 from Laccaria bicolor (strain S238N-H82 / ATCC MYA-4686) (Bicoloured deceiver).